A 950-amino-acid polypeptide reads, in one-letter code: Protocadherin alpha-13 (950 aa).

A signal peptide spans 1-29; it reads MLSSWQGGPRPRQLLLWLLILAAWETGSG. At 30–697 the chain is on the extracellular side; that stretch reads QLHYSVPEEA…GPEAALVDVN (668 aa). 6 Cadherin domains span residues 34–133, 134–242, 243–350, 351–455, 456–565, and 581–678; these read SVPE…PPIF, PESK…APEF, YQSV…APEV, TITS…APAF, AQPE…APAL, and MPRS…APQA. N-linked (GlcNAc...) asparagine glycosylation is found at Asn257 and Asn265. Residue Asn548 is glycosylated (N-linked (GlcNAc...) asparagine). A helical transmembrane segment spans residues 698-718; that stretch reads VYLIIAICAVSSLLVLTLLLY. Topologically, residues 719–950 are cytoplasmic; sequence TALRCSAPPT…GNSTTDNSDQ (232 aa). PXXP repeat units follow at residues 734-737, 774-777, 799-802, 832-835, 873-876, and 891-894; these read PGKP, PSLP, PRQP, PGGP, PGNP, and PGSP. Positions 734–894 are 6 X 4 AA repeats of P-X-X-P; that stretch reads PGKPTLVCSS…PDKFIIPGSP (161 aa). Disordered stretches follow at residues 780 to 806 and 829 to 950; these read LGSA…NPDW and RAGP…NSDQ. Basic and acidic residues predominate over residues 787 to 800; it reads GQREEDSECLKEPR. The span at 909-923 shows a compositional bias: basic and acidic residues; that stretch reads DKSDFITFGKKEETK.

Its subcellular location is the cell membrane. In terms of biological role, potential calcium-dependent cell-adhesion protein. May be involved in the establishment and maintenance of specific neuronal connections in the brain. The polypeptide is Protocadherin alpha-13 (PCDHA13) (Homo sapiens (Human)).